A 296-amino-acid chain; its full sequence is Glycine--tRNA ligase alpha subunit (296 aa).

The protein belongs to the class-II aminoacyl-tRNA synthetase family. Tetramer of two alpha and two beta subunits.

The protein localises to the cytoplasm. It carries out the reaction tRNA(Gly) + glycine + ATP = glycyl-tRNA(Gly) + AMP + diphosphate. The sequence is that of Glycine--tRNA ligase alpha subunit from Listeria welshimeri serovar 6b (strain ATCC 35897 / DSM 20650 / CCUG 15529 / CIP 8149 / NCTC 11857 / SLCC 5334 / V8).